Here is a 210-residue protein sequence, read N- to C-terminus: MSHQTVALASKAKSPKPKRGKLDKEKMTALEKHVSFFDRNKDGTVYPWETYQGFRALGTGRLLAAFVAIFINMGLSKKTRPGKGFSPLFPIDVKNSHLCMHGSDTDVYDDDGRFVESKFEEIFNKHARTHKDALTAEEIQKMLKTNRDPFDITGWLSDYGEWKILHTLAQDKNGLLSEKSVRAIYDGSLFHQLEKKRSSSSSRGKKQKLP.

The tract at residues 1–24 (MSHQTVALASKAKSPKPKRGKLDK) is disordered. One can recognise an EF-hand domain in the interval 25–60 (EKMTALEKHVSFFDRNKDGTVYPWETYQGFRALGTG). H33 serves as a coordination point for heme. The Ca(2+) site is built by D38, N40, D42, T44, and E49. The Proline-knot motif lies at 81 to 90 (PGKGFSPLFP). S188 is subject to Phosphoserine.

This sequence belongs to the caleosin family. In terms of assembly, homodimer. It depends on heme b as a cofactor. Ca(2+) is required as a cofactor. Expressed in pollen coat.

Its subcellular location is the secreted. The enzyme catalyses RH + ROOH = ROH + ROH.. Its function is as follows. Probable calcium-binding peroxygenase. May be involved in pollination. This is Probable peroxygenase 7 (PXG7) from Arabidopsis thaliana (Mouse-ear cress).